Here is a 510-residue protein sequence, read N- to C-terminus: GMP synthase [glutamine-hydrolyzing] (510 aa).

The region spanning 5-195 (LVLVVDFGGQ…LFNVCNLKGD (191 aa)) is the Glutamine amidotransferase type-1 domain. The active-site Nucleophile is cysteine 82. Residues histidine 169 and glutamate 171 contribute to the active site. Residues 196-385 (WSMSSFAEQQ…LGIPHKLVWR (190 aa)) form the GMPS ATP-PPase domain. Residue 223-229 (SGGVDSS) coordinates ATP.

Homodimer.

The catalysed reaction is XMP + L-glutamine + ATP + H2O = GMP + L-glutamate + AMP + diphosphate + 2 H(+). It participates in purine metabolism; GMP biosynthesis; GMP from XMP (L-Gln route): step 1/1. In terms of biological role, catalyzes the synthesis of GMP from XMP. The polypeptide is GMP synthase [glutamine-hydrolyzing] (Clostridium botulinum (strain ATCC 19397 / Type A)).